The chain runs to 1251 residues: Phospholipid-transporting ATPase IC (1251 aa).

The interval 1 to 54 (MSTERDSETTFDEDSQPNDEVVPYSDDETEDELDDQGSAVEPEQNRVNREAEEN) is disordered. Over 1 to 108 (MSTERDSETT…TYKYNAFTFI (108 aa)) the chain is Cytoplasmic. Over residues 25–35 (SDDETEDELDD) the composition is skewed to acidic residues. The span at 43–54 (EQNRVNREAEEN) shows a compositional bias: basic and acidic residues. The helical transmembrane segment at 109–130 (PMNLFEQFKRAANLYFLALLIL) threads the bilayer. The Exoplasmic loop portion of the chain corresponds to 131 to 136 (QAVPQI). The chain crosses the membrane as a helical span at residues 137 to 156 (STLAWYTTLVPLLVVLGVTA). The Cytoplasmic segment spans residues 157–340 (IKDLVDDVAR…TKIDYLMNYM (184 aa)). The helical transmembrane segment at 341-362 (VYTIFVVLILLSAGLAIGHAYW) threads the bilayer. Residues 363 to 389 (EAQVGNSSWYLYDGEDDTPSYRGFLIF) are Exoplasmic loop-facing. The chain crosses the membrane as a helical span at residues 390–411 (WGYIIVLNTMVPISLYVSVEVI). Over 412–949 (RLGQSHFINW…GRWSYIRMCK (538 aa)) the chain is Cytoplasmic. Asp454 serves as the catalytic 4-aspartylphosphate intermediate. ATP-binding residues include Asp454, Lys455, Thr456, Glu555, Phe596, Lys619, Arg652, Thr732, Gly733, Asp734, Arg867, and Lys873. Residue Asp454 participates in Mg(2+) binding. Thr456 provides a ligand contact to Mg(2+). Position 893 (Asp893) interacts with Mg(2+). Residues Asn896 and Asp897 each contribute to the ATP site. Position 897 (Asp897) interacts with Mg(2+). Residues 950 to 970 (FLRYFFYKNFAFTLVHFWYSF) traverse the membrane as a helical segment. The Exoplasmic loop portion of the chain corresponds to 971-982 (FNGYSAQTAYED). Residues 983–1002 (WFITLYNVLYTSLPVLLMGL) traverse the membrane as a helical segment. At 1003–1032 (LDQDVSDKLSLRFPGLYIVGQRDLLFNYKR) the chain is on the cytoplasmic side. The chain crosses the membrane as a helical span at residues 1033 to 1054 (FFVSLLHGVLTSMILFFIPLGA). The Exoplasmic loop segment spans residues 1055–1068 (YLQTVGQDGEAPSD). A helical transmembrane segment spans residues 1069–1091 (YQSFAVTIASALVITVNFQIGLD). At 1092–1097 (TSYWTF) the chain is on the cytoplasmic side. Residues 1098–1118 (VNAFSIFGSIALYFGIMFDFH) form a helical membrane-spanning segment. The Exoplasmic loop portion of the chain corresponds to 1119–1138 (SAGIHVLFPSAFQFTGTASN). The chain crosses the membrane as a helical span at residues 1139 to 1163 (ALRQPYIWLTIILAVAVCLLPVVAI). Residues 1164 to 1251 (RFLSMTIWPS…TAEYRRTGDS (88 aa)) are Cytoplasmic-facing. Ser1223 is modified (phosphoserine).

The protein belongs to the cation transport ATPase (P-type) (TC 3.A.3) family. Type IV subfamily. Component of a P4-ATPase flippase complex which consists of a catalytic alpha subunit ATP8B1 and an accessory beta subunit TMEM30A. The flippase ATP8B1:TMEM30A complex can form an intermediate phosphoenzyme in vitro. Also interacts with beta subunit TMEM30B. Requires Mg(2+) as cofactor. As to expression, found in most tissues except brain and skeletal muscle. Most abundant in pancreas and small intestine.

It localises to the cell membrane. It is found in the apical cell membrane. The protein resides in the cell projection. Its subcellular location is the stereocilium. The protein localises to the endoplasmic reticulum. It localises to the golgi apparatus. The enzyme catalyses ATP + H2O + phospholipidSide 1 = ADP + phosphate + phospholipidSide 2.. It catalyses the reaction a 1,2-diacyl-sn-glycero-3-phosphocholine(out) + ATP + H2O = a 1,2-diacyl-sn-glycero-3-phosphocholine(in) + ADP + phosphate + H(+). The catalysed reaction is a 1,2-diacyl-sn-glycero-3-phospho-L-serine(out) + ATP + H2O = a 1,2-diacyl-sn-glycero-3-phospho-L-serine(in) + ADP + phosphate + H(+). Catalytic component of a P4-ATPase flippase complex which catalyzes the hydrolysis of ATP coupled to the transport of phospholipids, in particular phosphatidylcholines (PC), from the outer to the inner leaflet of the plasma membrane. May participate in the establishment of the canalicular membrane integrity by ensuring asymmetric distribution of phospholipids in the canicular membrane. Thus may have a role in the regulation of bile acids transport into the canaliculus, uptake of bile acids from intestinal contents into intestinal mucosa or both and protect hepatocytes from bile salts. Involved in the microvillus formation in polarized epithelial cells; the function seems to be independent from its flippase activity. Participates in correct apical membrane localization of CDC42, CFTR and SLC10A2. Enables CDC42 clustering at the apical membrane during enterocyte polarization through the interaction between CDC42 polybasic region and negatively charged membrane lipids provided by ATP8B1. Together with TMEM30A is involved in uptake of the synthetic drug alkylphospholipid perifosine. Required for the preservation of cochlear hair cells in the inner ear. May act as cardiolipin transporter during inflammatory injury. The sequence is that of Phospholipid-transporting ATPase IC from Homo sapiens (Human).